The sequence spans 81 residues: Photosystem I iron-sulfur center (81 aa).

2 consecutive 4Fe-4S ferredoxin-type domains span residues 2 to 31 and 39 to 68; these read SHFV…MIPW and IASA…VRVY. 8 residues coordinate [4Fe-4S] cluster: C11, C14, C17, C21, C48, C51, C54, and C58.

The eukaryotic PSI reaction center is composed of at least 11 subunits. The cofactor is [4Fe-4S] cluster.

Its subcellular location is the plastid thylakoid membrane. It carries out the reaction reduced [plastocyanin] + hnu + oxidized [2Fe-2S]-[ferredoxin] = oxidized [plastocyanin] + reduced [2Fe-2S]-[ferredoxin]. In terms of biological role, apoprotein for the two 4Fe-4S centers FA and FB of photosystem I (PSI); essential for photochemical activity. FB is the terminal electron acceptor of PSI, donating electrons to ferredoxin. The C-terminus interacts with PsaA/B/D and helps assemble the protein into the PSI complex. Required for binding of PsaD and PsaE to PSI. PSI is a plastocyanin-ferredoxin oxidoreductase, converting photonic excitation into a charge separation, which transfers an electron from the donor P700 chlorophyll pair to the spectroscopically characterized acceptors A0, A1, FX, FA and FB in turn. This is Photosystem I iron-sulfur center from Cuscuta exaltata (Tall dodder).